The primary structure comprises 462 residues: Fez family zinc finger protein 1 (462 aa).

The Engrailed homology 1 repressor signature appears at 34–49 (PLAFSIERIMSRTPEP). 6 consecutive C2H2-type zinc fingers follow at residues 260–282 (FTCEVCGKVFNAHYNLTRHMPVH), 288–310 (FVCKICGKGFRQASTLCRHKIIH), 316–338 (HKCNQCGKAFNRSSTLNTHTRIH), 344–366 (FVCEFCGKGFHQKGNYKNHKLTH), 372–394 (FKCNICNKAFHQIYNLTFHMHTH), and 400–423 (FTCPTCGKGFCRNFDLKKHVRKLH). A disordered region spans residues 441–462 (LLLPNREPSPTIQSPQLQKSGY). Residues 448 to 462 (PSPTIQSPQLQKSGY) are compositionally biased toward polar residues.

This sequence belongs to the krueppel C2H2-type zinc-finger protein family.

Its subcellular location is the nucleus. Transcription repressor. Involved in the development of the forebrain region. In Xenopus tropicalis (Western clawed frog), this protein is Fez family zinc finger protein 1 (fezf1).